We begin with the raw amino-acid sequence, 281 residues long: Urease accessory protein UreD (281 aa).

Belongs to the UreD family. As to quaternary structure, ureD, UreF and UreG form a complex that acts as a GTP-hydrolysis-dependent molecular chaperone, activating the urease apoprotein by helping to assemble the nickel containing metallocenter of UreC. The UreE protein probably delivers the nickel.

It is found in the cytoplasm. In terms of biological role, required for maturation of urease via the functional incorporation of the urease nickel metallocenter. This is Urease accessory protein UreD from Pseudomonas savastanoi pv. phaseolicola (strain 1448A / Race 6) (Pseudomonas syringae pv. phaseolicola (strain 1448A / Race 6)).